The primary structure comprises 197 residues: Probable adenylyl-sulfate kinase (197 aa).

33–40 serves as a coordination point for ATP; that stretch reads GLSGSGKS. The Phosphoserine intermediate role is filled by Ser107.

The protein belongs to the APS kinase family.

It catalyses the reaction adenosine 5'-phosphosulfate + ATP = 3'-phosphoadenylyl sulfate + ADP + H(+). Its pathway is sulfur metabolism; hydrogen sulfide biosynthesis; sulfite from sulfate: step 2/3. Its function is as follows. Catalyzes the synthesis of activated sulfate. The polypeptide is Probable adenylyl-sulfate kinase (cysC) (Bacillus subtilis (strain 168)).